The primary structure comprises 530 residues: Probable serine/threonine-protein kinase fnkB (530 aa).

Positions 11-268 (WEIVETLKSN…SITLIDHPFL (258 aa)) constitute a Protein kinase domain. ATP is bound by residues 17-25 (LKSNVFKVN) and K43. Catalysis depends on D131, which acts as the Proton acceptor.

This sequence belongs to the protein kinase superfamily. STE Ser/Thr protein kinase family. Requires Mg(2+) as cofactor.

It catalyses the reaction L-seryl-[protein] + ATP = O-phospho-L-seryl-[protein] + ADP + H(+). The enzyme catalyses L-threonyl-[protein] + ATP = O-phospho-L-threonyl-[protein] + ADP + H(+). The chain is Probable serine/threonine-protein kinase fnkB from Dictyostelium discoideum (Social amoeba).